The primary structure comprises 481 residues: Coniferyl aldehyde dehydrogenase (481 aa).

Residues Glu221 and Cys255 contribute to the active site.

This sequence belongs to the aldehyde dehydrogenase family. In terms of assembly, homodimer.

The catalysed reaction is (E)-coniferaldehyde + NADP(+) + H2O = (E)-ferulate + NADPH + 2 H(+). It carries out the reaction (E)-coniferaldehyde + NAD(+) + H2O = (E)-ferulate + NADH + 2 H(+). Functionally, catalyzes the NAD(+)-dependent oxidation of coniferyl aldehyde to ferulic acid and which is induced during growth with eugenol as the carbon source. The polypeptide is Coniferyl aldehyde dehydrogenase (calB) (Pseudomonas sp. (strain HR199 / DSM 7063)).